The chain runs to 250 residues: 2,3-bisphosphoglycerate-dependent phosphoglycerate mutase (250 aa).

Substrate-binding positions include 10–17 (RHGESQWN), 23–24 (TG), R62, 89–92 (ERHY), K100, 116–117 (RR), and 185–186 (GN). The active-site Tele-phosphohistidine intermediate is the H11. The active-site Proton donor/acceptor is the E89.

The protein belongs to the phosphoglycerate mutase family. BPG-dependent PGAM subfamily. Homodimer.

The enzyme catalyses (2R)-2-phosphoglycerate = (2R)-3-phosphoglycerate. It functions in the pathway carbohydrate degradation; glycolysis; pyruvate from D-glyceraldehyde 3-phosphate: step 3/5. Its function is as follows. Catalyzes the interconversion of 2-phosphoglycerate and 3-phosphoglycerate. This is 2,3-bisphosphoglycerate-dependent phosphoglycerate mutase from Citrobacter koseri (strain ATCC BAA-895 / CDC 4225-83 / SGSC4696).